Here is a 231-residue protein sequence, read N- to C-terminus: Urease accessory protein UreF (231 aa).

The protein belongs to the UreF family. As to quaternary structure, ureD, UreF and UreG form a complex that acts as a GTP-hydrolysis-dependent molecular chaperone, activating the urease apoprotein by helping to assemble the nickel containing metallocenter of UreC. The UreE protein probably delivers the nickel.

It localises to the cytoplasm. Functionally, required for maturation of urease via the functional incorporation of the urease nickel metallocenter. The protein is Urease accessory protein UreF of Magnetococcus marinus (strain ATCC BAA-1437 / JCM 17883 / MC-1).